The chain runs to 316 residues: Lipoyl synthase (316 aa).

Positions 66, 71, 77, 92, 96, 99, and 306 each coordinate [4Fe-4S] cluster. Residues 78-295 form the Radical SAM core domain; the sequence is FNRGTATFMI…NLIAFDLGFK (218 aa).

The protein belongs to the radical SAM superfamily. Lipoyl synthase family. [4Fe-4S] cluster is required as a cofactor.

Its subcellular location is the cytoplasm. The catalysed reaction is [[Fe-S] cluster scaffold protein carrying a second [4Fe-4S](2+) cluster] + N(6)-octanoyl-L-lysyl-[protein] + 2 oxidized [2Fe-2S]-[ferredoxin] + 2 S-adenosyl-L-methionine + 4 H(+) = [[Fe-S] cluster scaffold protein] + N(6)-[(R)-dihydrolipoyl]-L-lysyl-[protein] + 4 Fe(3+) + 2 hydrogen sulfide + 2 5'-deoxyadenosine + 2 L-methionine + 2 reduced [2Fe-2S]-[ferredoxin]. The protein operates within protein modification; protein lipoylation via endogenous pathway; protein N(6)-(lipoyl)lysine from octanoyl-[acyl-carrier-protein]: step 2/2. Catalyzes the radical-mediated insertion of two sulfur atoms into the C-6 and C-8 positions of the octanoyl moiety bound to the lipoyl domains of lipoate-dependent enzymes, thereby converting the octanoylated domains into lipoylated derivatives. This Wigglesworthia glossinidia brevipalpis protein is Lipoyl synthase.